The chain runs to 49 residues: Sperm protamine P1 (49 aa).

Belongs to the protamine P1 family. In terms of tissue distribution, testis.

It is found in the nucleus. It localises to the chromosome. Functionally, protamines substitute for histones in the chromatin of sperm during the haploid phase of spermatogenesis. They compact sperm DNA into a highly condensed, stable and inactive complex. The chain is Sperm protamine P1 (PRM1) from Pteropus hypomelanus (Island flying fox).